The following is a 498-amino-acid chain: Glutamate--tRNA ligase (498 aa).

The 'HIGH' region signature appears at 12–22; it reads PSPTGHLHIGN. The short motif at 259 to 263 is the 'KMSKS' region element; the sequence is KLSKR. Lys262 contributes to the ATP binding site.

Belongs to the class-I aminoacyl-tRNA synthetase family. Glutamate--tRNA ligase type 1 subfamily. In terms of assembly, monomer.

The protein resides in the cytoplasm. It carries out the reaction tRNA(Glu) + L-glutamate + ATP = L-glutamyl-tRNA(Glu) + AMP + diphosphate. Catalyzes the attachment of glutamate to tRNA(Glu) in a two-step reaction: glutamate is first activated by ATP to form Glu-AMP and then transferred to the acceptor end of tRNA(Glu). The polypeptide is Glutamate--tRNA ligase (Limosilactobacillus fermentum (strain NBRC 3956 / LMG 18251) (Lactobacillus fermentum)).